Reading from the N-terminus, the 1192-residue chain is DNA topoisomerase 2 (1192 aa).

Residues Asn64, Asn95, and 142-149 (GTNGVGLK) contribute to the ATP site. 3 residues coordinate Mg(2+): Glu438, Asp539, and Asp541. Positions 707–1174 (IPNFLDGMTR…PGASVWLEEI (468 aa)) constitute a Topo IIA-type catalytic domain. Residue Tyr800 is the O-(5'-phospho-DNA)-tyrosine intermediate of the active site.

This sequence belongs to the type II topoisomerase family. Mg(2+) serves as cofactor. Mn(2+) is required as a cofactor. It depends on Ca(2+) as a cofactor.

The protein localises to the host cytoplasm. It carries out the reaction ATP-dependent breakage, passage and rejoining of double-stranded DNA.. Functionally, type II topoisomerase. Processively relaxes supercoiled DNA. Displays DNA-supercoiling activity only when associated with the viral histone-like protein. The chain is DNA topoisomerase 2 from Ornithodoros (relapsing fever ticks).